A 304-amino-acid polypeptide reads, in one-letter code: ATP synthase gamma chain (304 aa).

The protein belongs to the ATPase gamma chain family. F-type ATPases have 2 components, CF(1) - the catalytic core - and CF(0) - the membrane proton channel. CF(1) has five subunits: alpha(3), beta(3), gamma(1), delta(1), epsilon(1). CF(0) has three main subunits: a, b and c.

The protein resides in the cell membrane. Produces ATP from ADP in the presence of a proton gradient across the membrane. The gamma chain is believed to be important in regulating ATPase activity and the flow of protons through the CF(0) complex. This is ATP synthase gamma chain from Mycobacterium ulcerans (strain Agy99).